The primary structure comprises 620 residues: UvrABC system protein C (620 aa).

Positions 13 to 92 (DKPGVYIMKN…IKKYSPRYNI (80 aa)) constitute a GIY-YIG domain. Residues 204–239 (TSIIKKLKLEMEKAAEELEFEKAAKIRDRILAIELI) enclose the UVR domain.

It belongs to the UvrC family. As to quaternary structure, interacts with UvrB in an incision complex.

Its subcellular location is the cytoplasm. In terms of biological role, the UvrABC repair system catalyzes the recognition and processing of DNA lesions. UvrC both incises the 5' and 3' sides of the lesion. The N-terminal half is responsible for the 3' incision and the C-terminal half is responsible for the 5' incision. This Clostridium perfringens (strain 13 / Type A) protein is UvrABC system protein C.